A 244-amino-acid polypeptide reads, in one-letter code: Small ribosomal subunit protein uS3 (244 aa).

In terms of domain architecture, KH type-2 spans 39 to 110 (IRNFIQKKYS…QVRINVVEVE (72 aa)). Residues 221–244 (GAIPRRKGSRKPQQFEDRSSNENS) are disordered. The span at 233–244 (QQFEDRSSNENS) shows a compositional bias: basic and acidic residues.

The protein belongs to the universal ribosomal protein uS3 family. Part of the 30S ribosomal subunit. Forms a tight complex with proteins S10 and S14.

In terms of biological role, binds the lower part of the 30S subunit head. Binds mRNA in the 70S ribosome, positioning it for translation. This Prochlorococcus marinus (strain MIT 9515) protein is Small ribosomal subunit protein uS3.